Reading from the N-terminus, the 347-residue chain is Ileal sodium/bile acid cotransporter (347 aa).

Residues 1–29 (MSNLTVGCLANATVCEGASCVAPESNFNA) lie on the Extracellular side of the membrane. N-linked (GlcNAc...) asparagine glycans are attached at residues asparagine 3 and asparagine 11. A helical membrane pass occupies residues 30–50 (ILSVVLSTVLTILLALVMFSM). Residues 51–83 (GCNVEIKKFLGHIRRPWGIFIGFLCQFGIMPLT) are Cytoplasmic-facing. The helical transmembrane segment at 84–104 (GFVLAVAFGIMPIQAVVVLIM) threads the bilayer. Over 105-127 (GCCPGGTASNILAYWVDGDMDLS) the chain is Extracellular. A helical transmembrane segment spans residues 128-148 (VSMTTCSTLLALGMMPLCLYV). Residues 149-158 (YTKMWVDSGT) are Cytoplasmic-facing. Residues 159-179 (IVIPYDNIGTSLVALVVPVSI) form a helical membrane-spanning segment. Topologically, residues 180–196 (GMFVNHKWPQKAKIILK) are extracellular. The helical transmembrane segment at 197 to 217 (VGSIAGAVLIVLIAVVGGILY) threads the bilayer. The Cytoplasmic portion of the chain corresponds to 218–225 (QSAWIIEP). A helical membrane pass occupies residues 226–246 (KLWIIGTIFPMAGYSLGFFLA). The Extracellular segment spans residues 247–289 (RIAGQPWYRCRTVALETGMQNTQLCSTIVQLSFSPEDLTYVFT). A helical transmembrane segment spans residues 290 to 310 (FPLIYSIFQIAFAAIFLGIYV). The Cytoplasmic portion of the chain corresponds to 311–347 (AYRKCHGKNDAEFPDIKDTKTEPESSFHQMNGGFQPE). The span at 323–335 (FPDIKDTKTEPES) shows a compositional bias: basic and acidic residues. Residues 323 to 347 (FPDIKDTKTEPESSFHQMNGGFQPE) form a disordered region. Serine 336 carries the post-translational modification Phosphoserine.

It belongs to the bile acid:sodium symporter (BASS) (TC 2.A.28) family. As to quaternary structure, monomer and homodimer.

The protein localises to the membrane. The catalysed reaction is taurocholate(out) + 2 Na(+)(out) = taurocholate(in) + 2 Na(+)(in). The enzyme catalyses cholate(out) + 2 Na(+)(out) = cholate(in) + 2 Na(+)(in). It catalyses the reaction taurochenodeoxycholate(out) + 2 Na(+)(out) = taurochenodeoxycholate(in) + 2 Na(+)(in). It carries out the reaction tauroursodeoxycholate(out) + 2 Na(+)(out) = tauroursodeoxycholate(in) + 2 Na(+)(in). The catalysed reaction is glycocholate(out) + 2 Na(+)(out) = glycocholate(in) + 2 Na(+)(in). The enzyme catalyses tauronorcholate(out) + 2 Na(+)(out) = tauronorcholate(in) + 2 Na(+)(in). It catalyses the reaction tauroallocholate(out) + 2 Na(+)(out) = tauroallocholate(in) + 2 Na(+)(in). It carries out the reaction taurodeoxycholate(out) + 2 Na(+)(out) = taurodeoxycholate(in) + 2 Na(+)(in). The catalysed reaction is tauro-beta-muricholate(out) + 2 Na(+)(out) = tauro-beta-muricholate(in) + 2 Na(+)(in). Functionally, plays a critical role in the sodium-dependent reabsorption of bile acids from the lumen of the small intestine. Transports various bile acids, unconjugated or conjugated, such as cholate and taurocholate. Also responsible for bile acid transport in the renal proximal tubules, a salvage mechanism that helps conserve bile acids. Works collaboratively with the Na(+)-taurocholate cotransporting polypeptide (NTCP), the organic solute transporter (OST), and the bile salt export pump (BSEP), to ensure efficacious biological recycling of bile acids during enterohepatic circulation. The polypeptide is Ileal sodium/bile acid cotransporter (SLC10A2) (Oryctolagus cuniculus (Rabbit)).